Reading from the N-terminus, the 92-residue chain is MSRSLKKGPFVAYHLLKKINKMNADGKKDVITTWSRSSTILPNMIGFTIAVYNGKQHVPVFISDQLVGHKLGEFVSTRTFKSHIKADKKTKR.

The protein belongs to the universal ribosomal protein uS19 family.

Its subcellular location is the plastid. It is found in the chloroplast. Functionally, protein S19 forms a complex with S13 that binds strongly to the 16S ribosomal RNA. This chain is Small ribosomal subunit protein uS19c, found in Thalassiosira pseudonana (Marine diatom).